A 122-amino-acid chain; its full sequence is Large ribosomal subunit protein uL14 (122 aa).

The protein belongs to the universal ribosomal protein uL14 family. Part of the 50S ribosomal subunit. Forms a cluster with proteins L3 and L19. In the 70S ribosome, L14 and L19 interact and together make contacts with the 16S rRNA in bridges B5 and B8.

Binds to 23S rRNA. Forms part of two intersubunit bridges in the 70S ribosome. The chain is Large ribosomal subunit protein uL14 from Phytoplasma mali (strain AT).